The following is a 158-amino-acid chain: Cyclic pyranopterin monophosphate synthase (158 aa).

Substrate is bound by residues 73–75 (LCH) and 110–111 (ME). Asp125 is a catalytic residue.

This sequence belongs to the MoaC family. Homohexamer; trimer of dimers.

The enzyme catalyses (8S)-3',8-cyclo-7,8-dihydroguanosine 5'-triphosphate = cyclic pyranopterin phosphate + diphosphate. It participates in cofactor biosynthesis; molybdopterin biosynthesis. In terms of biological role, catalyzes the conversion of (8S)-3',8-cyclo-7,8-dihydroguanosine 5'-triphosphate to cyclic pyranopterin monophosphate (cPMP). This is Cyclic pyranopterin monophosphate synthase from Azotobacter vinelandii (strain DJ / ATCC BAA-1303).